The primary structure comprises 695 residues: Elongation factor G (695 aa).

Residues 12 to 286 (DKLRNIGIMA…AVIDYLPSPL (275 aa)) form the tr-type G domain. GTP-binding positions include 21–28 (AHIDAGKT), 85–89 (DTPGH), and 139–142 (NKMD).

This sequence belongs to the TRAFAC class translation factor GTPase superfamily. Classic translation factor GTPase family. EF-G/EF-2 subfamily.

The protein localises to the cytoplasm. Catalyzes the GTP-dependent ribosomal translocation step during translation elongation. During this step, the ribosome changes from the pre-translocational (PRE) to the post-translocational (POST) state as the newly formed A-site-bound peptidyl-tRNA and P-site-bound deacylated tRNA move to the P and E sites, respectively. Catalyzes the coordinated movement of the two tRNA molecules, the mRNA and conformational changes in the ribosome. The protein is Elongation factor G of Thermotoga petrophila (strain ATCC BAA-488 / DSM 13995 / JCM 10881 / RKU-1).